Reading from the N-terminus, the 328-residue chain is MGTVTTADPHASFLADKGGKVFVAGHRGLVGSAILRHLVSLGFTNVVVRTHAELDLTRQSDVEAFFAAELPRYVVLAAAKVGGIHANSTFPADFIAANLQIQTNVVDAALKCGSVRKLLFLGSSCIYPKFAPQPIPENSLLSGPLEPTNEWYAVAKIAGIKMCQAYRIQHGFDAISAMPTNLYGPQDNFHPENSHVLPALIRRFHEAKASNAAEVVVWGTGSPLREFLHVDDLADAVIFLMDHYSGLEHVNVGSGSEVTIKELAELVKEVVGFQGKLVWDSSKPDGTPRKLMDSSKIQEMGWKPKVPLKEGLVETYKWYVENVISAKK.

Residue 25-31 (GHRGLVG) participates in NADP(+) binding. Tyr152 (proton donor/acceptor) is an active-site residue. NADP(+)-binding positions include Lys156, 179-182 (PTNL), and His195. Substrate-binding residues include Arg203, Trp218, Arg225, and Asp285.

This sequence belongs to the NAD(P)-dependent epimerase/dehydratase family. Fucose synthase subfamily. Homodimer.

It carries out the reaction GDP-beta-L-fucose + NADP(+) = GDP-4-dehydro-alpha-D-rhamnose + NADPH + H(+). Its pathway is nucleotide-sugar biosynthesis; GDP-L-fucose biosynthesis via de novo pathway; GDP-L-fucose from GDP-alpha-D-mannose: step 2/2. Functionally, catalyzes the two-step NADP-dependent conversion of GDP-4-dehydro-6-deoxy-D-mannose to GDP-fucose, involving an epimerase and a reductase reaction. The chain is Probable GDP-L-fucose synthase 1 from Oryza sativa subsp. japonica (Rice).